Consider the following 81-residue polypeptide: U-poneritoxin(01)-Om2a (81 aa).

The first 25 residues, 1–25 (MKPSGITFAFLVVFMMAIMYNSVQA), serve as a signal peptide directing secretion. Residues 26-47 (AAIADADADAEAKAFADAFAEA) constitute a propeptide that is removed on maturation.

The protein belongs to the formicidae venom precursor-01 superfamily. Truncated sequences of this peptide have also been found in the venom. It is possible they have been cleaved in the venom. As to expression, expressed by the venom gland.

It localises to the secreted. Its function is as follows. Cationic amphipathic alpha-helical peptide with antimicrobial activities against E.coli (MIC=6.2 uM), S.aureus (MIC=6.2 uM), and S.cerevisiae (MIC=50 uM). Also shows histamine-releasing activity (30.1% at 10 uM) and a weak hemolytic activity (10.4% at 50 uM). The protein is U-poneritoxin(01)-Om2a of Odontomachus monticola (Trap-jaw ant).